A 264-amino-acid polypeptide reads, in one-letter code: MKKLKLHGFNNLTKSLSFCIYDICYAKTAEERDGYIAYIDELYNANRLTEILTETCSIIGANILNIARQDYEPQGASVTILVSEEPVDPQLIDKTEHPGPLPETVVAHLDKSHICVHTYPESHPEGGLCTFRADIEVSTCGVISPLKALNYLIHQLESDIVTIDYRVRGFTRDVNGMKHFIDHEINSIQNFMSDDIKSLYDMMDVNVYQENIFHTKMLLKEFDLKHYMFHTRPEELTEEERKVITDQLWKEMREIYYGRNIPSV.

Residue Ser112 is the Schiff-base intermediate with substrate; via pyruvic acid of the active site. A Pyruvic acid (Ser); by autocatalysis modification is found at Ser112. The active-site Proton acceptor; for processing activity is the His117. Cys140 functions as the Proton donor; for catalytic activity in the catalytic mechanism.

The protein belongs to the prokaryotic AdoMetDC family. Type 2 subfamily. As to quaternary structure, heterooctamer of four alpha and four beta chains arranged as a tetramer of alpha/beta heterodimers. It depends on pyruvate as a cofactor. Post-translationally, is synthesized initially as an inactive proenzyme. Formation of the active enzyme involves a self-maturation process in which the active site pyruvoyl group is generated from an internal serine residue via an autocatalytic post-translational modification. Two non-identical subunits are generated from the proenzyme in this reaction, and the pyruvate is formed at the N-terminus of the alpha chain, which is derived from the carboxyl end of the proenzyme. The post-translation cleavage follows an unusual pathway, termed non-hydrolytic serinolysis, in which the side chain hydroxyl group of the serine supplies its oxygen atom to form the C-terminus of the beta chain, while the remainder of the serine residue undergoes an oxidative deamination to produce ammonia and the pyruvoyl group blocking the N-terminus of the alpha chain.

The enzyme catalyses S-adenosyl-L-methionine + H(+) = S-adenosyl 3-(methylsulfanyl)propylamine + CO2. Its pathway is amine and polyamine biosynthesis; S-adenosylmethioninamine biosynthesis; S-adenosylmethioninamine from S-adenosyl-L-methionine: step 1/1. Functionally, catalyzes the decarboxylation of S-adenosylmethionine to S-adenosylmethioninamine (dcAdoMet), the propylamine donor required for the synthesis of the polyamines spermine and spermidine from the diamine putrescine. The polypeptide is S-adenosylmethionine decarboxylase proenzyme (Cronobacter sakazakii (strain ATCC BAA-894) (Enterobacter sakazakii)).